We begin with the raw amino-acid sequence, 273 residues long: Anthranilate synthase beta subunit 2, chloroplastic (273 aa).

The transit peptide at 1 to 47 directs the protein to the chloroplast; that stretch reads MATAARLLPKIQSPASPAVAEARRRRPSSLRLGVTSGPARTLKQKLV. Residues 15 to 35 are disordered; the sequence is ASPAVAEARRRRPSSLRLGVT. The Glutamine amidotransferase type-1 domain maps to 70-269; sequence PIIVIDNYDS…IKIIEGYEAL (200 aa). 121-123 is a binding site for L-glutamine; that stretch reads GPG. Cys-148 (nucleophile) is an active-site residue. L-glutamine-binding positions include Gln-152 and 202–203; that span reads SL. Active-site residues include His-243 and Glu-245.

Heterotetramer consisting of two non-identical subunits: a beta subunit and a large alpha subunit. As to expression, expressed in roots and leaves.

Its subcellular location is the plastid. The protein localises to the chloroplast. It catalyses the reaction chorismate + L-glutamine = anthranilate + pyruvate + L-glutamate + H(+). It functions in the pathway amino-acid biosynthesis; L-tryptophan biosynthesis; L-tryptophan from chorismate: step 1/5. Part of a heterotetrameric complex that catalyzes the two-step biosynthesis of anthranilate, an intermediate in the biosynthesis of L-tryptophan. In the first step, the glutamine-binding beta subunit of anthranilate synthase (AS) provides the glutamine amidotransferase activity which generates ammonia as a substrate that, along with chorismate, is used in the second step, catalyzed by the large alpha subunit of AS to produce anthranilate. This Oryza sativa subsp. japonica (Rice) protein is Anthranilate synthase beta subunit 2, chloroplastic.